A 158-amino-acid polypeptide reads, in one-letter code: 2-C-methyl-D-erythritol 2,4-cyclodiphosphate synthase (158 aa).

A divalent metal cation is bound by residues Asp-9 and His-11. 4-CDP-2-C-methyl-D-erythritol 2-phosphate is bound by residues Asp-9–His-11 and His-35–Ser-36. His-43 provides a ligand contact to a divalent metal cation. 4-CDP-2-C-methyl-D-erythritol 2-phosphate-binding positions include Asp-57–Gly-59, Phe-62–Asp-66, Thr-133–Glu-136, Phe-140, and Arg-143.

The protein belongs to the IspF family. In terms of assembly, homotrimer. A divalent metal cation serves as cofactor.

It carries out the reaction 4-CDP-2-C-methyl-D-erythritol 2-phosphate = 2-C-methyl-D-erythritol 2,4-cyclic diphosphate + CMP. The protein operates within isoprenoid biosynthesis; isopentenyl diphosphate biosynthesis via DXP pathway; isopentenyl diphosphate from 1-deoxy-D-xylulose 5-phosphate: step 4/6. In terms of biological role, involved in the biosynthesis of isopentenyl diphosphate (IPP) and dimethylallyl diphosphate (DMAPP), two major building blocks of isoprenoid compounds. Catalyzes the conversion of 4-diphosphocytidyl-2-C-methyl-D-erythritol 2-phosphate (CDP-ME2P) to 2-C-methyl-D-erythritol 2,4-cyclodiphosphate (ME-CPP) with a corresponding release of cytidine 5-monophosphate (CMP). The sequence is that of 2-C-methyl-D-erythritol 2,4-cyclodiphosphate synthase from Methylococcus capsulatus (strain ATCC 33009 / NCIMB 11132 / Bath).